A 150-amino-acid polypeptide reads, in one-letter code: Cytochrome c oxidase subunit 5A, mitochondrial (150 aa).

The transit peptide at 1–41 (MLGAALRRCAVAATTWAGPRGLLHSARTPGPAAAIQSVRCY) directs the protein to the mitochondrion. The SIFI-degron signature appears at 2–17 (LGAALRRCAVAATTWA). N6-acetyllysine occurs at positions 87 and 113. T141 is modified (phosphothreonine).

Belongs to the cytochrome c oxidase subunit 5A family. Component of the cytochrome c oxidase (complex IV, CIV), a multisubunit enzyme composed of 14 subunits. The complex is composed of a catalytic core of 3 subunits MT-CO1, MT-CO2 and MT-CO3, encoded in the mitochondrial DNA, and 11 supernumerary subunits COX4I, COX5A, COX5B, COX6A, COX6B, COX6C, COX7A, COX7B, COX7C, COX8 and NDUFA4, which are encoded in the nuclear genome. The complex exists as a monomer or a dimer and forms supercomplexes (SCs) in the inner mitochondrial membrane with NADH-ubiquinone oxidoreductase (complex I, CI) and ubiquinol-cytochrome c oxidoreductase (cytochrome b-c1 complex, complex III, CIII), resulting in different assemblies (supercomplex SCI(1)III(2)IV(1) and megacomplex MCI(2)III(2)IV(2)). Interacts with AFG1L. Interacts with RAB5IF. In response to mitochondrial stress, the precursor protein is ubiquitinated by the SIFI complex in the cytoplasm before mitochondrial import, leading to its degradation. Within the SIFI complex, UBR4 initiates ubiquitin chain that are further elongated or branched by KCMF1.

It localises to the mitochondrion inner membrane. The protein operates within energy metabolism; oxidative phosphorylation. In terms of biological role, component of the cytochrome c oxidase, the last enzyme in the mitochondrial electron transport chain which drives oxidative phosphorylation. The respiratory chain contains 3 multisubunit complexes succinate dehydrogenase (complex II, CII), ubiquinol-cytochrome c oxidoreductase (cytochrome b-c1 complex, complex III, CIII) and cytochrome c oxidase (complex IV, CIV), that cooperate to transfer electrons derived from NADH and succinate to molecular oxygen, creating an electrochemical gradient over the inner membrane that drives transmembrane transport and the ATP synthase. Cytochrome c oxidase is the component of the respiratory chain that catalyzes the reduction of oxygen to water. Electrons originating from reduced cytochrome c in the intermembrane space (IMS) are transferred via the dinuclear copper A center (CU(A)) of subunit 2 and heme A of subunit 1 to the active site in subunit 1, a binuclear center (BNC) formed by heme A3 and copper B (CU(B)). The BNC reduces molecular oxygen to 2 water molecules using 4 electrons from cytochrome c in the IMS and 4 protons from the mitochondrial matrix. This Papio anubis (Olive baboon) protein is Cytochrome c oxidase subunit 5A, mitochondrial (COX5A).